The sequence spans 112 residues: Outer membrane protein assembly factor BamE (112 aa).

The N-terminal stretch at 1–19 is a signal peptide; sequence MRCKTLTAAAAVLLMLTAG. Residue C20 is the site of N-palmitoyl cysteine attachment. C20 is lipidated: S-diacylglycerol cysteine.

It belongs to the BamE family. Part of the Bam complex, which is composed of the outer membrane protein BamA, and four lipoproteins BamB, BamC, BamD and BamE.

Its subcellular location is the cell outer membrane. Part of the outer membrane protein assembly complex, which is involved in assembly and insertion of beta-barrel proteins into the outer membrane. This is Outer membrane protein assembly factor BamE from Salmonella typhimurium (strain LT2 / SGSC1412 / ATCC 700720).